The following is a 404-amino-acid chain: Serine/threonine-protein kinase UCN (404 aa).

A Protein kinase domain is found at 22–340 (LKVLKLLGKG…AAEIKEHAFF (319 aa)). Residues 28–36 (LGKGATGTV) and Lys55 each bind ATP. The active-site Proton acceptor is the Asp153. The interval 185–207 (EFYHLSDPEPDPNPESNLSHNKK) is disordered. Residues 341 to 404 (KGVRWELLTE…CSENNPFVDF (64 aa)) form the AGC-kinase C-terminal domain.

It belongs to the protein kinase superfamily. AGC Ser/Thr protein kinase family. In terms of tissue distribution, expressed in the epidermis and cortex of the transition zone of the root apex and developing flowers. Expressed in rosette leaves, stems and siliques.

The protein localises to the cytoplasm. It is found in the nucleus. It carries out the reaction L-seryl-[protein] + ATP = O-phospho-L-seryl-[protein] + ADP + H(+). The enzyme catalyses L-threonyl-[protein] + ATP = O-phospho-L-threonyl-[protein] + ADP + H(+). Functionally, regulates planar ovule integument development by suppressing aberrantly oriented growth. Maintains planar growth of integuments by repressing the developmental regulator and transcription factor KAN4 which is involved in the control of early integument growth and polarity. Restricts growth in stamen filaments, petals, and cotyledons. The sequence is that of Serine/threonine-protein kinase UCN from Arabidopsis thaliana (Mouse-ear cress).